We begin with the raw amino-acid sequence, 203 residues long: CS5 fimbrial subunit (203 aa).

An N-terminal signal peptide occupies residues 1 to 22 (MKKNLLITSVLAMATVSGSVLA).

It localises to the fimbrium. In terms of biological role, major subunit of fimbriae. Fimbriae (also called pili), are polar filaments radiating from the surface of the bacterium to a length of 0.5-1.5 micrometers and numbering 100-300 per cell. They enable bacteria to colonize the epithelium of specific host organs. This is CS5 fimbrial subunit from Escherichia coli.